Reading from the N-terminus, the 160-residue chain is Nucleotide-binding protein BP2916 (160 aa).

The protein belongs to the YajQ family.

Functionally, nucleotide-binding protein. This Bordetella pertussis (strain Tohama I / ATCC BAA-589 / NCTC 13251) protein is Nucleotide-binding protein BP2916.